Reading from the N-terminus, the 364-residue chain is Homeobox protein KNOX3 (364 aa).

The interval 13–49 (TAHGQHHSQLPWGSSPLSAVISPPPQQQQQHQQQSAG) is disordered. Residues 19-29 (HSQLPWGSSPL) are compositionally biased toward polar residues. The ELK domain maps to 246 to 266 (ELKHHLLKKYSGYLSSLKQEL). Residues 267–330 (SKKKKKGKLP…NQRKRHWKPT (64 aa)) constitute a DNA-binding region (homeobox; TALE-type).

It belongs to the TALE/KNOX homeobox family. Binds DNA as a monomer. The unit of inflorescence is the spikelet, which bears a fertile tract, the lemma, and the floret consisting of palea, two lodicules, three stamens and the pistil. The lemma is completed by the awn, an appendage homologous to the laminae of normal leaves. Expressed in the inflorescences and lemmas and at lower levels, in palea and vascular bundles.

The protein resides in the nucleus. In terms of biological role, may play a role in meristem formation and/or maintenance. Overexpression causes the hooded phenotype characterized by the appearance of an extra flower of inverse polarity on the lemma. Binds to the DNA sequence 5'-TGAC-3'. This is Homeobox protein KNOX3 (KNOX3) from Hordeum vulgare (Barley).